Consider the following 333-residue polypeptide: MAVRGSGTLTPFSIQAILNKKEERGGLATPEGRPAPGGTEVAVTAAPAVCCWRIFGETEAGALGGAEDSLLASPARTRTAVGQSAESPGGWDSDSALSEENEGRRRCADVPGASGTGRARVTLGLDQPGCELHAAKDLEEEAPVRSDSEMSASVSGDHSPRGEDDSVSPGGARVPGLRGAAGSGASGGQAGGVEEEEEPAAPKPRKKRSRAAFSHAQVFELERRFNHQRYLSGPERADLAASLKLTETQVKIWFQNRRYKTKRRQMAADLLASAPAAKKVAVKVLVRDDQRQYLPGEVLRPPSLLPLQPSYYYPYYCLPGWALSTCAAAAGTQ.

Disordered regions lie at residues 74 to 121 and 137 to 212; these read PART…RARV and DLEE…SRAA. Basic and acidic residues predominate over residues 137–148; sequence DLEEEAPVRSDS. A compositionally biased stretch (gly residues) spans 179 to 191; the sequence is GAAGSGASGGQAG. Residues 206-265 constitute a DNA-binding region (homeobox); it reads KKRSRAAFSHAQVFELERRFNHQRYLSGPERADLAASLKLTETQVKIWFQNRRYKTKRRQ.

Belongs to the NK-3 homeobox family. In terms of tissue distribution, expressed widely in mesoderm at the gastroduodenal junction (at protein level). Expressed in visceral mesoderm and embryonic skeleton. Expression is restricted to immature proliferative chondrocytes during endochondral ossification.

The protein resides in the nucleus. Transcriptional repressor that acts as a negative regulator of chondrocyte maturation. PLays a role in distal stomach development; required for proper antral-pyloric morphogenesis and development of antral-type epithelium. In concert with GSC, defines the structural components of the middle ear; required for tympanic ring and gonium development and in the regulation of the width of the malleus. This chain is Homeobox protein Nkx-3.2 (Nkx3-2), found in Mus musculus (Mouse).